The following is a 145-amino-acid chain: Large ribosomal subunit protein uL11 (145 aa).

The protein belongs to the universal ribosomal protein uL11 family. In terms of assembly, part of the ribosomal stalk of the 50S ribosomal subunit. Interacts with L10 and the large rRNA to form the base of the stalk. L10 forms an elongated spine to which L12 dimers bind in a sequential fashion forming a multimeric L10(L12)X complex. In terms of processing, one or more lysine residues are methylated.

Functionally, forms part of the ribosomal stalk which helps the ribosome interact with GTP-bound translation factors. The protein is Large ribosomal subunit protein uL11 of Coxiella burnetii (strain Dugway 5J108-111).